A 561-amino-acid polypeptide reads, in one-letter code: DNA ligase B (561 aa).

Residue lysine 125 is the N6-AMP-lysine intermediate of the active site.

Belongs to the NAD-dependent DNA ligase family. LigB subfamily.

The catalysed reaction is NAD(+) + (deoxyribonucleotide)n-3'-hydroxyl + 5'-phospho-(deoxyribonucleotide)m = (deoxyribonucleotide)n+m + AMP + beta-nicotinamide D-nucleotide.. Its function is as follows. Catalyzes the formation of phosphodiester linkages between 5'-phosphoryl and 3'-hydroxyl groups in double-stranded DNA using NAD as a coenzyme and as the energy source for the reaction. This chain is DNA ligase B, found in Salmonella paratyphi A (strain AKU_12601).